The chain runs to 435 residues: GTPase Obg (435 aa).

In terms of domain architecture, Obg spans 1–159; the sequence is MAFIDKCKIV…IEVVLELKTI (159 aa). The 170-residue stretch at 160 to 329 folds into the OBG-type G domain; that stretch reads ADIGIIGLPN…MLDDVIKIYF (170 aa). Residues 166 to 173, 191 to 195, 212 to 215, 282 to 285, and 310 to 312 contribute to the GTP site; these read GLPNAGKS, FTTLN, DIPG, NKID, and SAL. Residues Ser173 and Thr193 each contribute to the Mg(2+) site. The OCT domain maps to 355-435; that stretch reads TPKNKELDKT…IYDITLEFEE (81 aa).

Belongs to the TRAFAC class OBG-HflX-like GTPase superfamily. OBG GTPase family. In terms of assembly, monomer. Requires Mg(2+) as cofactor.

It localises to the cytoplasm. Its function is as follows. An essential GTPase which binds GTP, GDP and possibly (p)ppGpp with moderate affinity, with high nucleotide exchange rates and a fairly low GTP hydrolysis rate. Plays a role in control of the cell cycle, stress response, ribosome biogenesis and in those bacteria that undergo differentiation, in morphogenesis control. The protein is GTPase Obg of Ureaplasma urealyticum serovar 10 (strain ATCC 33699 / Western).